We begin with the raw amino-acid sequence, 331 residues long: Type 2 lactosamine alpha-2,3-sialyltransferase (331 aa).

The Cytoplasmic portion of the chain corresponds to 1-4 (MRGY). Residues 5-25 (LVAIFLSAVFLYYVLHCILWG) form a helical; Signal-anchor for type II membrane protein membrane-spanning segment. Topologically, residues 26-331 (TNVYWVAPVE…KNLVINLTQD (306 aa)) are lumenal. N-linked (GlcNAc...) asparagine glycosylation is found at Asn-129, Asn-181, Asn-282, Asn-295, Asn-308, and Asn-327.

It belongs to the glycosyltransferase 29 family. Ubiquitous.

It localises to the golgi apparatus membrane. The enzyme catalyses a neolactoside nLc4Cer(d18:1(4E)) + CMP-N-acetyl-beta-neuraminate = a neolactoside IV(3)-alpha-NeuAc-nLc4Cer(d18:1(4E)) + CMP + H(+). It catalyses the reaction a beta-D-galactosyl-(1-&gt;4)-N-acetyl-beta-D-glucosaminyl derivative + CMP-N-acetyl-beta-neuraminate = an N-acetyl-alpha-neuraminyl-(2-&gt;3)-beta-D-galactosyl-(1-&gt;4)-N-acetyl-beta-D-glucosaminyl derivative + CMP + H(+). The catalysed reaction is a neolactoside nLc6Cer(d18:1(4E)) + CMP-N-acetyl-beta-neuraminate = a neolactoside VI(3)-alpha-NeuNAc-nLc6Cer(d18:1(4E)) + CMP + H(+). Its function is as follows. Transfers the sialyl residue from CMP-N-acetyl-beta-neuraminate to the terminal galactose residue on sugar chains of glycoproteins and glycolipids. It's alpha-2,3-sialyltransferase activity is specific toward type II glycan chains (Galbeta1-4GlcNAc) on glycoproteins and glycolipids such as neolactosides nLc4Cer and nLc6Cer, whose sialyl-products serve as precursors for the Lewis X antigen. Critically involved in the synthesis of functional selectin ligands needed for neutrophil recruitment during inflammation and lymphocyte homing to the lymph nodes. The chain is Type 2 lactosamine alpha-2,3-sialyltransferase (ST3GAL6) from Homo sapiens (Human).